The following is a 187-amino-acid chain: Casparian strip membrane protein 5 (187 aa).

Residues 1 to 24 are Cytoplasmic-facing; that stretch reads MKSGQAEIMETSKGIQKSGLMSRR. A helical transmembrane segment spans residues 25–45; it reads IAILEFILRIVAFFNTIGSAI. The Extracellular portion of the chain corresponds to 46 to 74; that stretch reads LMGTTHETLPFFTQFIRFQAEYNDLPALT. The chain crosses the membrane as a helical span at residues 75-95; sequence FFVVANAVVSGYLILSLTLAF. Over 96–107 the chain is Cytoplasmic; it reads VHIVKRKTQNTR. The chain crosses the membrane as a helical span at residues 108–128; sequence ILLIILDVAMLGLLTSGASSA. Topologically, residues 129-161 are extracellular; sequence AAIVYLAHNGNNKTNWFAICQQFNSFCERISGS. An N-linked (GlcNAc...) asparagine glycan is attached at Asn-140. Residues 162 to 182 traverse the membrane as a helical segment; the sequence is LIGSFIAIVLLILLILLSAIA. Residues 183–187 are Cytoplasmic-facing; it reads LSRRH.

This sequence belongs to the Casparian strip membrane proteins (CASP) family. Homodimer and heterodimers with other CASP proteins. Interacts with CASP1, CASP3 and CASP4.

It localises to the cell membrane. Regulates membrane-cell wall junctions and localized cell wall deposition. Required for establishment of the Casparian strip membrane domain (CSD) and the subsequent formation of Casparian strips, a cell wall modification of the root endodermis that determines an apoplastic barrier between the intraorganismal apoplasm and the extraorganismal apoplasm and prevents lateral diffusion. This chain is Casparian strip membrane protein 5 (CASP5), found in Arabidopsis thaliana (Mouse-ear cress).